We begin with the raw amino-acid sequence, 414 residues long: 2,3-diketo-5-methylthiopentyl-1-phosphate enolase (414 aa).

Lys99 acts as the Proton acceptor in catalysis. Residues Lys148, 174-177, His265, Gly338, and 360-361 contribute to the substrate site; these read KDDE and GG. Mg(2+) is bound by residues Lys174, Asp176, and Glu177. The residue at position 174 (Lys174) is an N6-carboxylysine.

The protein belongs to the RuBisCO large chain family. Type IV subfamily. As to quaternary structure, homodimer. Mg(2+) serves as cofactor.

It catalyses the reaction 5-methylsulfanyl-2,3-dioxopentyl phosphate = 2-hydroxy-5-methylsulfanyl-3-oxopent-1-enyl phosphate. It functions in the pathway amino-acid biosynthesis; L-methionine biosynthesis via salvage pathway; L-methionine from S-methyl-5-thio-alpha-D-ribose 1-phosphate: step 3/6. Its function is as follows. Catalyzes the enolization of 2,3-diketo-5-methylthiopentyl-1-phosphate (DK-MTP-1-P) into 2-hydroxy-3-keto-5-methylthiopentenyl-1-phosphate (HK-MTPenyl-1-P). This Bacillus cereus (strain ZK / E33L) protein is 2,3-diketo-5-methylthiopentyl-1-phosphate enolase.